A 158-amino-acid chain; its full sequence is MAAKKPSAFKIAAENRKARYNYEIGETFEAGLMLTGTEVKSLRTGKATIAESYASVDREGEVFLVNATIPEYLEANRFNHAPKRPRKLLLHGREIAKLSQGVERQGMTIVPLKIYFNDRGRAKIEIALARGKQLHDKRETEKKRDWNKEKGRLLRDKH.

The tract at residues 133-158 is disordered; the sequence is QLHDKRETEKKRDWNKEKGRLLRDKH.

Belongs to the SmpB family.

It localises to the cytoplasm. Its function is as follows. Required for rescue of stalled ribosomes mediated by trans-translation. Binds to transfer-messenger RNA (tmRNA), required for stable association of tmRNA with ribosomes. tmRNA and SmpB together mimic tRNA shape, replacing the anticodon stem-loop with SmpB. tmRNA is encoded by the ssrA gene; the 2 termini fold to resemble tRNA(Ala) and it encodes a 'tag peptide', a short internal open reading frame. During trans-translation Ala-aminoacylated tmRNA acts like a tRNA, entering the A-site of stalled ribosomes, displacing the stalled mRNA. The ribosome then switches to translate the ORF on the tmRNA; the nascent peptide is terminated with the 'tag peptide' encoded by the tmRNA and targeted for degradation. The ribosome is freed to recommence translation, which seems to be the essential function of trans-translation. The polypeptide is SsrA-binding protein (Beijerinckia indica subsp. indica (strain ATCC 9039 / DSM 1715 / NCIMB 8712)).